The following is a 199-amino-acid chain: Peroxynitrite isomerase (199 aa).

A GXWXGXG motif is present at residues 21–27 (GEWEGRG). His190 lines the heme b pocket.

The protein belongs to the nitrobindin family. In terms of assembly, homodimer. The cofactor is heme b.

The catalysed reaction is peroxynitrite = nitrate. It participates in nitrogen metabolism. Functionally, heme-binding protein able to scavenge peroxynitrite and to protect free L-tyrosine against peroxynitrite-mediated nitration, by acting as a peroxynitrite isomerase that converts peroxynitrite to nitrate. Therefore, this protein likely plays a role in peroxynitrite sensing and in the detoxification of reactive nitrogen and oxygen species (RNS and ROS, respectively). Is able to bind nitric oxide (NO) in vitro, but may act as a sensor of peroxynitrite levels in vivo. The sequence is that of Peroxynitrite isomerase from Paenarthrobacter aurescens (strain TC1).